A 177-amino-acid chain; its full sequence is MTDTATRLAFARAAQAQRRLHRRPPASPRASPGARDGGSPTQRCGQAYESAALRWLARQGLRPLARNLRCRAGEIDLAMRDGEVLVLVEVRARAHAGYGGAAASIGASKQGRLARAAALLLPVLLRRHWPGAPPPVRFDVVAFEAGRPHWLRGAFWLAEHAPAQGRRGQDAQGWRVR.

Residues 13–43 (AAQAQRRLHRRPPASPRASPGARDGGSPTQR) form a disordered region.

The protein belongs to the UPF0102 family.

This is UPF0102 protein BPP4042 from Bordetella parapertussis (strain 12822 / ATCC BAA-587 / NCTC 13253).